Reading from the N-terminus, the 59-residue chain is Large ribosomal subunit protein bL32 (59 aa).

Positions 1–59 are disordered; that stretch reads MAVQQNKKSPSKRGMHRSHDFLTTSPLAVEPSTGEVHLRHHISPNGYYRGKKVVKTKND. A compositionally biased stretch (basic residues) spans 49-59; the sequence is RGKKVVKTKND.

This sequence belongs to the bacterial ribosomal protein bL32 family.

The sequence is that of Large ribosomal subunit protein bL32 from Burkholderia mallei (strain NCTC 10247).